The primary structure comprises 470 residues: MIKLKNFLNIYNLNYKYQYKNKINLYLIRQGLNINLIKNLSSNIFLYMFIYNFKKYSLKLLNIFKLPDWNFFDCPNINYDNIIYYSSILKDNNLIYYLKNNLNIEFLDSILIKNNSIDIIFDSMSILHTTQYFLKKLGIIFLPLFDIIFKYPLLIKKYLGTIISYKDNFFANINSIIFSEGSFCYIPKYVKCNFNLSTYFKTNSSDFAQFERTLIIVGKYSYVSYLEGCTASLYKESQLHVAIVEIIVKDYGYIKYYTLQNWYRGDYLGNGGLYNFTTKRGICLNYSKLDWIQVEVGSIITWKYPSTILKGKFSISNFYSISFISNMQIADTGSKMYHIGSYTKSYIISKSISLNNSLNIFRGLVYIKPFSYKSYNYTECSSLIFGNNSLTVTIPYIKNYNNTSYVKQEAFVSKIEIIYLFLLMQRGLSISESISLLIIGFCSDIYNKLPFEFNLEIPILFSLKIKDIFN.

It belongs to the iron-sulfur cluster assembly SufBD family. Component of a complex composed of SufB, SufC and SufD in a stoichiometric ratio of 1:2:1. Interacts with SufC. Interacts with SufD.

The protein operates within cofactor biosynthesis; iron-sulfur cluster biosynthesis. Participates in the sulfur mobilization (SUF) pathway for iron-sulfur (Fe-S) cluster biogenesis. As part of a complex consisting of SufB-SufC(2)-SufD, involved in assembly of [4Fe-4S] clusters. Exhibits ATPase activity. This Plasmodium falciparum (isolate 3D7) protein is Iron-sulfur cluster assembly protein SufB.